The chain runs to 197 residues: uncharacterized protein (197 aa).

A signal peptide spans 1–30 (MSTYIIINIALLIAIVALIFFLSKKTKSEA).

This is an uncharacterized protein from Acanthamoeba polyphaga (Amoeba).